We begin with the raw amino-acid sequence, 308 residues long: Homeobox protein abdominal-A homolog (308 aa).

The segment at residues 138–197 is a DNA-binding region (homeobox); that stretch reads RRRGRQTYTRFQTLELEKEFHFNHYLTRRRRIEIAHALCLTERQIKIWFQNRRMKLKKEL. A compositionally biased stretch (basic and acidic residues) spans 207–221; the sequence is ARREREEQDKMKNES. The segment at 207-277 is disordered; that stretch reads ARREREEQDK…SGNLGSHLHH (71 aa). Low complexity predominate over residues 223-247; sequence KSAQQHHSQKQAQQEHTVVGSQQTS. The segment covering 248 to 269 has biased composition (gly residues); the sequence is NGGGTGGGTGGSGGAGSGGSSG.

This sequence belongs to the Antp homeobox family.

Its subcellular location is the nucleus. Functionally, sequence-specific transcription factor which is part of a developmental regulatory system that provides cells with specific positional identities on the anterior-posterior axis. The sequence is that of Homeobox protein abdominal-A homolog from Anopheles gambiae (African malaria mosquito).